The chain runs to 135 residues: uncharacterized protein (135 aa).

The chain crosses the membrane as a helical span at residues 4–24 (LGVFLILASIVCGVVAICGCT).

Its subcellular location is the membrane. This is an uncharacterized protein from Methanocaldococcus jannaschii (strain ATCC 43067 / DSM 2661 / JAL-1 / JCM 10045 / NBRC 100440) (Methanococcus jannaschii).